Consider the following 874-residue polypeptide: Cap-specific mRNA (nucleoside-2'-O-)-methyltransferase 1A (874 aa).

The segment covering 1 to 10 (MSERGDDDRT) has biased composition (basic and acidic residues). The segment at 1–64 (MSERGDDDRT…APPTKQKTKA (64 aa)) is disordered. Residues 60 to 106 (QKTKAEEMMERMGYKAGEGLGKNKQGIQEPVALSTQRGKTGLGHEGA) enclose the G-patch domain. Residues 211 to 440 (FFQNRAAMKT…ERYITCKGLR (230 aa)) form the RrmJ-type SAM-dependent 2'-O-MTase domain. S-adenosyl-L-methionine contacts are provided by Gly273 and Asp354. The active-site Proton acceptor is the Lys394. The segment at 535 to 555 (PNKQRPRGGDRGSRNGNQERL) is disordered.

It catalyses the reaction a 5'-end (N(7)-methyl 5'-triphosphoguanosine)-ribonucleoside in mRNA + S-adenosyl-L-methionine = a 5'-end (N(7)-methyl 5'-triphosphoguanosine)-(2'-O-methyl-ribonucleoside) in mRNA + S-adenosyl-L-homocysteine + H(+). Its function is as follows. S-adenosyl-L-methionine-dependent methyltransferase that mediates mRNA cap1 2'-O-ribose methylation to the 5'-cap structure of mRNAs. Methylates the ribose of the first nucleotide of a m(7)GpppG-capped mRNA to produce m(7)GpppNmp (cap1). Cap1 modification is linked to higher levels of translation. In Caenorhabditis briggsae, this protein is Cap-specific mRNA (nucleoside-2'-O-)-methyltransferase 1A.